Consider the following 241-residue polypeptide: Probable transcriptional regulatory protein LHK_02347 (241 aa).

The protein belongs to the TACO1 family.

The protein localises to the cytoplasm. The chain is Probable transcriptional regulatory protein LHK_02347 from Laribacter hongkongensis (strain HLHK9).